The chain runs to 417 residues: D-amino acid dehydrogenase (417 aa).

3 to 17 (VVILGSGVVGVSTAW) contacts FAD.

The protein belongs to the DadA oxidoreductase family. The cofactor is FAD.

It carries out the reaction a D-alpha-amino acid + A + H2O = a 2-oxocarboxylate + AH2 + NH4(+). It functions in the pathway amino-acid degradation; D-alanine degradation; NH(3) and pyruvate from D-alanine: step 1/1. Oxidative deamination of D-amino acids. The polypeptide is D-amino acid dehydrogenase (Pectobacterium atrosepticum (strain SCRI 1043 / ATCC BAA-672) (Erwinia carotovora subsp. atroseptica)).